Reading from the N-terminus, the 1081-residue chain is DNA polymerase catalytic subunit (1081 aa).

It belongs to the DNA polymerase type-B family. Forms a complex with the ssDNA-binding protein UL29, the DNA polymerase processivity factor, and the alkaline exonuclease. Interacts with the putative helicase-primase complex subunit UL8; this interaction may coordinate leading and lagging strand DNA synthesis at the replication fork.

It localises to the host nucleus. The catalysed reaction is DNA(n) + a 2'-deoxyribonucleoside 5'-triphosphate = DNA(n+1) + diphosphate. The enzyme catalyses Endonucleolytic cleavage to 5'-phosphomonoester.. Its function is as follows. Replicates viral genomic DNA. The replication complex is composed of six viral proteins: the DNA polymerase, processivity factor, primase, primase-associated factor, helicase, and ssDNA-binding protein. Additionally, the polymerase contains an intrinsic ribonuclease H (RNase H) activity that specifically degrades RNA/DNA heteroduplexes or duplex DNA substrates in the 5' to 3' direction. Therefore, it can catalyze the excision of the RNA primers that initiate the synthesis of Okazaki fragments at a replication fork during viral DNA replication. This is DNA polymerase catalytic subunit (UL30) from Psittacid herpesvirus 1 (isolate Amazon parrot/-/97-0001/1997) (PsHV-1).